We begin with the raw amino-acid sequence, 220 residues long: Splicing factor U2AF 26 kDa subunit (220 aa).

Ala-2 is subject to N-acetylalanine. Residues 12 to 40 form a C3H1-type 1 zinc finger; it reads EKDKVNCSFYFKIGACRHGDRCSRLHNKP. The RRM domain occupies 65 to 147; sequence SHCHVSDVEV…QAVHAELSPV (83 aa). Residues 149-176 form a C3H1-type 2 zinc finger; the sequence is DFRESCCRQYEMGECTRGGFCNFMHLRP. The tract at residues 186–220 is disordered; sequence YGRGPRRRSPPRSHTGHRPRERNRRRSPDHRHGRF. The segment covering 189 to 220 has biased composition (basic residues); sequence GPRRRSPPRSHTGHRPRERNRRRSPDHRHGRF.

It belongs to the splicing factor SR family. In terms of assembly, interacts with GFI1, U2AF2 and C1QBP.

It is found in the nucleus. It localises to the nucleus speckle. The protein resides in the cytoplasm. Functionally, RNA-binding protein that function as a pre-mRNA splicing factor. Plays a critical role in both constitutive and enhancer-dependent splicing by mediating protein-protein interactions and protein-RNA interactions required for accurate 3'-splice site selection. Acts by enhancing the binding of U2AF2 to weak pyrimidine tracts. Also participates in the regulation of alternative pre-mRNA splicing. Activates exon 5 skipping of PTPRC during T-cell activation; an event reversed by GFI1. Binds to RNA at the AG dinucleotide at the 3'-splice site. Shows a preference for AGC or AGA. This Bos taurus (Bovine) protein is Splicing factor U2AF 26 kDa subunit (U2AF1L4).